A 110-amino-acid chain; its full sequence is Large ribosomal subunit protein uL22 (110 aa).

Belongs to the universal ribosomal protein uL22 family. As to quaternary structure, part of the 50S ribosomal subunit.

This protein binds specifically to 23S rRNA; its binding is stimulated by other ribosomal proteins, e.g. L4, L17, and L20. It is important during the early stages of 50S assembly. It makes multiple contacts with different domains of the 23S rRNA in the assembled 50S subunit and ribosome. Its function is as follows. The globular domain of the protein is located near the polypeptide exit tunnel on the outside of the subunit, while an extended beta-hairpin is found that lines the wall of the exit tunnel in the center of the 70S ribosome. The sequence is that of Large ribosomal subunit protein uL22 from Glaesserella parasuis serovar 5 (strain SH0165) (Haemophilus parasuis).